Here is a 325-residue protein sequence, read N- to C-terminus: Tartrate-resistant acid phosphatase type 5 (325 aa).

The signal sequence occupies residues 1–21 (MDTWTLLLVLHTSLLLPWAEG). 2 N-linked (GlcNAc...) asparagine glycosylation sites follow: asparagine 116 and asparagine 147.

Exists either as monomer or, after proteolytic processing, as a dimer of two chains linked by disulfide bond(s). Requires Fe cation as cofactor.

The protein localises to the lysosome. It carries out the reaction a phosphate monoester + H2O = an alcohol + phosphate. This is Tartrate-resistant acid phosphatase type 5 (ACP5) from Oryctolagus cuniculus (Rabbit).